The sequence spans 118 residues: MANYRGGRINEEFKREISNLIQNEVKDPRLTAMISVTDVKVTKDLRYAKVYVSIFSKDDEEKKNNLEALKNASGFIRKSVGQKINLRHTPEIIIELDDSINYGMHMDELIQRISKGNE.

This sequence belongs to the RbfA family. In terms of assembly, monomer. Binds 30S ribosomal subunits, but not 50S ribosomal subunits or 70S ribosomes.

The protein localises to the cytoplasm. One of several proteins that assist in the late maturation steps of the functional core of the 30S ribosomal subunit. Associates with free 30S ribosomal subunits (but not with 30S subunits that are part of 70S ribosomes or polysomes). Required for efficient processing of 16S rRNA. May interact with the 5'-terminal helix region of 16S rRNA. This chain is Ribosome-binding factor A, found in Clostridium beijerinckii (strain ATCC 51743 / NCIMB 8052) (Clostridium acetobutylicum).